The chain runs to 248 residues: 1-(5-phosphoribosyl)-5-[(5-phosphoribosylamino)methylideneamino] imidazole-4-carboxamide isomerase (248 aa).

Asp-17 acts as the Proton acceptor in catalysis. Asp-136 serves as the catalytic Proton donor.

The protein belongs to the HisA/HisF family.

It is found in the cytoplasm. It carries out the reaction 1-(5-phospho-beta-D-ribosyl)-5-[(5-phospho-beta-D-ribosylamino)methylideneamino]imidazole-4-carboxamide = 5-[(5-phospho-1-deoxy-D-ribulos-1-ylimino)methylamino]-1-(5-phospho-beta-D-ribosyl)imidazole-4-carboxamide. It functions in the pathway amino-acid biosynthesis; L-histidine biosynthesis; L-histidine from 5-phospho-alpha-D-ribose 1-diphosphate: step 4/9. This Arthrobacter sp. (strain FB24) protein is 1-(5-phosphoribosyl)-5-[(5-phosphoribosylamino)methylideneamino] imidazole-4-carboxamide isomerase.